A 114-amino-acid polypeptide reads, in one-letter code: Ribonuclease P protein component (114 aa).

It belongs to the RnpA family. As to quaternary structure, consists of a catalytic RNA component (M1 or rnpB) and a protein subunit.

It catalyses the reaction Endonucleolytic cleavage of RNA, removing 5'-extranucleotides from tRNA precursor.. In terms of biological role, RNaseP catalyzes the removal of the 5'-leader sequence from pre-tRNA to produce the mature 5'-terminus. It can also cleave other RNA substrates such as 4.5S RNA. The protein component plays an auxiliary but essential role in vivo by binding to the 5'-leader sequence and broadening the substrate specificity of the ribozyme. This Borrelia turicatae (strain 91E135) protein is Ribonuclease P protein component.